The chain runs to 751 residues: MTQNLSQPPAVNAPESELDLVRYLDVLVANRWLIAGIAAVVMLLGATYAFLARPVYEADVLVQVEDNPNSAKSLLGDVSSLFDVKTDANAEIEILRSRMVVGKAVDNLHLYITAKPHYFPLIGAWVASRAKQLSEPGLFGLGGYTWGTELIDVDGFDVPEALEGQPFKLTALGNGRYRLENKSLDTPIEGVVGEPLEAKQSVGTIQLLVNTLAAKAGAAFELQRDSRLKTLEMLQDKLKISEKGKQSGIIGASLEGKNPALTAAIMNQIATEYVAQNIKRKAEEAERSLVFLDGLLPQLKLQLERAEMKYNEMRNLRGTFDLSEEGKAFLQESVTTETSLQELKQKRAELLTRFTASHPGVQAIDQQIAVMSGKVGAMTRRLKSLPNIEQDTVRLMRDVQVDNDLYVSLLNDMQQLKLVKAGKVGNVRLVDGAAVPEEPVKPKKLTVTALAGVLGVVLGVVAAFVRNTLFGGITEPQDIEEHTGLSVYATVPLSDVQIDLSSQLTTHKRGQYLLARRVPDDPSIESLRSLRTALQFAMQDSGNNLVVLTGPTPGVGKSFVSANLAAVIATGGKRVLLVDADMRKGYLHQYFGKDRKPGLLDLLAGDRSIEQVVHREVVPGLDFIATGLFPHNPSELLLNPRMVELMDTFRAQYDLVLIDTPPVLAVTDTAILAARAGTVLMVTRFERSTLGEIRETIKQLQHANVEVRGVVFNALDPNTYRYGYGSRYGRYRYVQYGYTSKPSAEAEAESA.

The Cytoplasmic portion of the chain corresponds to 1–31 (MTQNLSQPPAVNAPESELDLVRYLDVLVANR). The helical transmembrane segment at 32-52 (WLIAGIAAVVMLLGATYAFLA) threads the bilayer. Over 53–444 (RPVYEADVLV…VPEEPVKPKK (392 aa)) the chain is Periplasmic. Residues 445–465 (LTVTALAGVLGVVLGVVAAFV) form a helical membrane-spanning segment. The Cytoplasmic segment spans residues 466–751 (RNTLFGGITE…PSAEAEAESA (286 aa)).

Belongs to the etk/wzc family.

It localises to the cell inner membrane. It catalyses the reaction L-tyrosyl-[protein] + ATP = O-phospho-L-tyrosyl-[protein] + ADP + H(+). Probably involved in polymerization and/or export of exopolysaccharide EPS I which functions as a virulence factor. May be involved in an ATP-dependent process in the pathway for EPS I production, possibly export of the trimeric repeat units across the inner membrane or their polymerization. This is Putative tyrosine-protein kinase EpsB (epsB) from Ralstonia nicotianae (strain ATCC BAA-1114 / GMI1000) (Ralstonia solanacearum).